Reading from the N-terminus, the 61-residue chain is Small ribosomal subunit protein uS14 (61 aa).

Zn(2+) contacts are provided by C24, C27, C40, and C43.

The protein belongs to the universal ribosomal protein uS14 family. Zinc-binding uS14 subfamily. In terms of assembly, part of the 30S ribosomal subunit. Contacts proteins S3 and S10. Requires Zn(2+) as cofactor.

Its function is as follows. Binds 16S rRNA, required for the assembly of 30S particles and may also be responsible for determining the conformation of the 16S rRNA at the A site. This Pelobacter propionicus (strain DSM 2379 / NBRC 103807 / OttBd1) protein is Small ribosomal subunit protein uS14.